A 176-amino-acid polypeptide reads, in one-letter code: Large ribosomal subunit protein uL6 (176 aa).

This sequence belongs to the universal ribosomal protein uL6 family. Part of the 50S ribosomal subunit.

Functionally, this protein binds to the 23S rRNA, and is important in its secondary structure. It is located near the subunit interface in the base of the L7/L12 stalk, and near the tRNA binding site of the peptidyltransferase center. The sequence is that of Large ribosomal subunit protein uL6 from Lactobacillus acidophilus (strain ATCC 700396 / NCK56 / N2 / NCFM).